Consider the following 305-residue polypeptide: GMP synthase [glutamine-hydrolyzing] subunit B (305 aa).

In terms of domain architecture, GMPS ATP-PPase spans 2–184 (VDANAFIDEA…LPLPEEISER (183 aa)). 29–35 (SGGVDSS) contacts ATP.

In terms of assembly, heterodimer composed of a glutamine amidotransferase subunit (A) and a GMP-binding subunit (B).

It carries out the reaction XMP + L-glutamine + ATP + H2O = GMP + L-glutamate + AMP + diphosphate + 2 H(+). Its pathway is purine metabolism; GMP biosynthesis; GMP from XMP (L-Gln route): step 1/1. Its function is as follows. Catalyzes the synthesis of GMP from XMP. The chain is GMP synthase [glutamine-hydrolyzing] subunit B from Methanocella arvoryzae (strain DSM 22066 / NBRC 105507 / MRE50).